A 215-amino-acid polypeptide reads, in one-letter code: FGFR1 oncogene partner 2 homolog (215 aa).

2 coiled-coil regions span residues 5–104 (IEKA…MSKY) and 161–185 (KEQERIFQLEQENKGLREILQITRE). A disordered region spans residues 194 to 215 (DASESTSLSALVTNSDLSLRKN). A compositionally biased stretch (polar residues) spans 197-215 (ESTSLSALVTNSDLSLRKN).

This sequence belongs to the SIKE family.

It localises to the cytoplasm. Its function is as follows. May be involved in wound healing pathway. The protein is FGFR1 oncogene partner 2 homolog (FGFR1OP2) of Pongo abelii (Sumatran orangutan).